We begin with the raw amino-acid sequence, 230 residues long: Lipoprotein-releasing system ATP-binding protein LolD (230 aa).

Residues 10-228 (LRAEHLSKVY…QLHMANGRLL (219 aa)) enclose the ABC transporter domain. 46–53 (GASGSGKS) contributes to the ATP binding site.

This sequence belongs to the ABC transporter superfamily. Lipoprotein translocase (TC 3.A.1.125) family. In terms of assembly, the complex is composed of two ATP-binding proteins (LolD) and two transmembrane proteins (LolC and LolE).

It is found in the cell inner membrane. Part of the ABC transporter complex LolCDE involved in the translocation of mature outer membrane-directed lipoproteins, from the inner membrane to the periplasmic chaperone, LolA. Responsible for the formation of the LolA-lipoprotein complex in an ATP-dependent manner. In Bordetella avium (strain 197N), this protein is Lipoprotein-releasing system ATP-binding protein LolD.